A 352-amino-acid polypeptide reads, in one-letter code: Beta-hexosaminidase (352 aa).

Residues Asp-74, Arg-82, Arg-149, and 179–180 (KH) each bind substrate. The Proton donor/acceptor role is filled by His-192. The Nucleophile role is filled by Asp-263.

Belongs to the glycosyl hydrolase 3 family. NagZ subfamily.

The protein resides in the cytoplasm. It carries out the reaction Hydrolysis of terminal non-reducing N-acetyl-D-hexosamine residues in N-acetyl-beta-D-hexosaminides.. It participates in cell wall biogenesis; peptidoglycan recycling. In terms of biological role, plays a role in peptidoglycan recycling by cleaving the terminal beta-1,4-linked N-acetylglucosamine (GlcNAc) from peptide-linked peptidoglycan fragments, giving rise to free GlcNAc, anhydro-N-acetylmuramic acid and anhydro-N-acetylmuramic acid-linked peptides. The polypeptide is Beta-hexosaminidase (Bordetella pertussis (strain Tohama I / ATCC BAA-589 / NCTC 13251)).